Consider the following 1737-residue polypeptide: Myosin-M heavy chain (1737 aa).

Residues 4-55 (LEGDIVWVPHTVNGYCRGKIIGYNEKNQVTVRLLELNEEIKINEQLIQNYNQ) enclose the Myosin N-terminal SH3-like domain. A Myosin motor domain is found at 59 to 886 (KDFSDMVEIQ…LYIYLEKKRY (828 aa)). Residue 154-161 (GESGSGKT) coordinates ATP. A disordered region spans residues 640 to 727 (KSNDNNSNNN…NNNSSNNKKS (88 aa)). 2 stretches are compositionally biased toward low complexity: residues 641-663 (SNDN…SSQS) and 679-724 (NSGS…SSNN). The actin-binding stretch occupies residues 754–761 (YIRCIKPN). 2 consecutive IQ domains span residues 889-918 (LVDS…SSLF) and 912-941 (NKES…LENK). The stretch at 926-1039 (QRAKKDFEQL…KKKNEQNLSL (114 aa)) forms a coiled coil. The span at 947 to 1028 (RKKELERQRK…IEKKRKEEEK (82 aa)) shows a compositional bias: basic and acidic residues. Disordered regions lie at residues 947 to 1099 (RKKE…PSTK), 1117 to 1199 (LHGS…PNFN), 1266 to 1290 (GINK…ANSS), and 1304 to 1364 (SLST…SNED). Positions 1044-1070 (ITNSPSLINTTTTTTTTTTTTTNTSSP) are enriched in low complexity. Pro residues predominate over residues 1071–1081 (PLSPPISPRPS). Low complexity predominate over residues 1082–1098 (TPSSTSSSSSTTSSPST). Over residues 1121–1131 (SHSDKNSKEDN) the composition is skewed to basic and acidic residues. Over residues 1132–1141 (NSNNNNNGDS) the composition is skewed to low complexity. The span at 1143–1153 (IILSSDSSFGQ) shows a compositional bias: polar residues. A compositionally biased stretch (pro residues) spans 1162 to 1171 (PTPPPPPPLK). Composition is skewed to polar residues over residues 1180-1198 (GVEN…SPNF) and 1274-1288 (RTIS…SRAN). A compositionally biased stretch (low complexity) spans 1304 to 1359 (SLSTSTTPSTPTTPKTPTTLSSSSVSTSTSLSSVSSSVSSSSSSSIPTPIIESTPS). Residues 1389–1572 (FRIKIINELI…SDIVQSINEA (184 aa)) form the DH domain. The PH domain occupies 1603-1714 (TLLMEGTVSA…WFKQIKALIQ (112 aa)).

It belongs to the TRAFAC class myosin-kinesin ATPase superfamily. Myosin family. As to quaternary structure, monomer.

The protein localises to the cytoplasm. In terms of biological role, myosins are actin-based motor molecules with ATPase activity. Involved in macropinocytosis and remodeling of actin cytoskeleton. The sequence is that of Myosin-M heavy chain (myoM) from Dictyostelium discoideum (Social amoeba).